We begin with the raw amino-acid sequence, 617 residues long: MTPYRSRTSTHGRTMAGARGLWRATGMKDEDFGKPIIAIANSFTQFVPGHVHLKDMGQLVAAEIAAAGGVAKEFNTIAVDDGIAMGHDGMLYSLPSRELIADAVEYMVNAHCADALVCISNCDKITPGMLMAAMRLNIPTIFVSGGPMEAGKVVLGGTERSVDLIDAMVVAGDAKVSDADVETIERSACPTCGSCSGMFTANSMNCLTEALGLSLPGNGSALATHVARRGLFEEAGRRIVDLAKRRYEHDDESTLPRAIASFKAFENAMSVDIAMGGSTNTVLHLLAAAQEGEVPFTMADIDRLSRRIPHLCKVSPSTADFYMEDVHRAGGVMGIMGELSRAGLLHEDLPTVHTPTLKAALDHWDIRRPVDDAVRAFFRAAPGGVRTVVPFSTDRLWDSLDDDRETGCIRDLDHAYSRDGGLAVLYGNLAPNGCIVKTAGVDASILTFTGTVRLCESQDEAVARILGGEIQAGDVVLVRYEGPKGGPGMQEMLYPTSYLKSRGLGKVCALVTDGRFSGGSSGLSIGHVSPEAAAGGPIGLVEEGDIIVIDIPARSIVVDLSDEELAARRSAMEARGRAGWKPAKPRKRAVSPALRAYAALTTSADRGAVRDVSQVER.

D81 contributes to the Mg(2+) binding site. C122 lines the [2Fe-2S] cluster pocket. Mg(2+) is bound by residues D123 and K124. N6-carboxylysine is present on K124. Position 195 (C195) interacts with [2Fe-2S] cluster. Mg(2+) is bound at residue E491. Catalysis depends on S517, which acts as the Proton acceptor.

This sequence belongs to the IlvD/Edd family. Homodimer. It depends on [2Fe-2S] cluster as a cofactor. Mg(2+) serves as cofactor.

The catalysed reaction is (2R)-2,3-dihydroxy-3-methylbutanoate = 3-methyl-2-oxobutanoate + H2O. It catalyses the reaction (2R,3R)-2,3-dihydroxy-3-methylpentanoate = (S)-3-methyl-2-oxopentanoate + H2O. The protein operates within amino-acid biosynthesis; L-isoleucine biosynthesis; L-isoleucine from 2-oxobutanoate: step 3/4. It functions in the pathway amino-acid biosynthesis; L-valine biosynthesis; L-valine from pyruvate: step 3/4. Functionally, functions in the biosynthesis of branched-chain amino acids. Catalyzes the dehydration of (2R,3R)-2,3-dihydroxy-3-methylpentanoate (2,3-dihydroxy-3-methylvalerate) into 2-oxo-3-methylpentanoate (2-oxo-3-methylvalerate) and of (2R)-2,3-dihydroxy-3-methylbutanoate (2,3-dihydroxyisovalerate) into 2-oxo-3-methylbutanoate (2-oxoisovalerate), the penultimate precursor to L-isoleucine and L-valine, respectively. The polypeptide is Dihydroxy-acid dehydratase (Rhodospirillum rubrum (strain ATCC 11170 / ATH 1.1.1 / DSM 467 / LMG 4362 / NCIMB 8255 / S1)).